Consider the following 920-residue polypeptide: Plasma membrane ATPase (920 aa).

The disordered stretch occupies residues 1–77 (MADHSASGAP…TPGGGRVVPE (77 aa)). Residues 1–115 (MADHSASGAP…KEEKENHFLK (115 aa)) are Cytoplasmic-facing. Residues 38 to 51 (EDDEDEDIDALIED) are compositionally biased toward acidic residues. Residues 116–138 (FLGFFVGPIQFVMEGAAVLAAGL) traverse the membrane as a helical segment. Over 139-140 (ED) the chain is Extracellular. Residues 141 to 160 (WVDFGVICGLLLLNAVVGFV) form a helical membrane-spanning segment. The Cytoplasmic segment spans residues 161 to 291 (QEFQAGSIVD…GSGHFTEVLN (131 aa)). Residues 292 to 314 (GIGTILLILVIFTLLIVWVSSFY) form a helical membrane-spanning segment. Over 315–321 (RSNPIVQ) the chain is Extracellular. The helical transmembrane segment at 322–354 (ILEFTLAITIIGVPVGLPAVVTTTMAVGAAYLA) threads the bilayer. The Cytoplasmic portion of the chain corresponds to 355 to 687 (KKKAIVQKLS…LKTSRQIFHR (333 aa)). Asp378 (4-aspartylphosphate intermediate) is an active-site residue. Mg(2+) contacts are provided by Asp634 and Asp638. A helical membrane pass occupies residues 688-713 (MYAYVVYRIALSIHLEIFLGLWIAIL). The Extracellular segment spans residues 714 to 720 (NRSLNIE). A helical transmembrane segment spans residues 721 to 738 (LVVFIAIFADVATLAIAY). The Cytoplasmic portion of the chain corresponds to 739–754 (DNAPYSQTPVKWNLPK). Residues 755–779 (LWGMSVLLGVVLAVGTWITVTTMYA) form a helical membrane-spanning segment. Residues 780 to 806 (QGENGGIVQNFGNMDEVLFLQISLTEN) lie on the Extracellular side of the membrane. 2 helical membrane passes run 807-826 (WLIF…PSWQ) and 827-847 (LSGA…WGWF). At 848–853 (EHSDTS) the chain is on the extracellular side. Residues 854–878 (IVAVVRIWIFSFGIFCIMGGVYYIL) traverse the membrane as a helical segment. Topologically, residues 879-920 (QDSVGFDNLMHGKSPKGNQKQRSLEDFVVSLQRVSTQHEKSQ) are cytoplasmic.

This sequence belongs to the cation transport ATPase (P-type) (TC 3.A.3) family. Type IIIA subfamily.

The protein localises to the cell membrane. The enzyme catalyses ATP + H2O + H(+)(in) = ADP + phosphate + 2 H(+)(out). Functionally, the plasma membrane ATPase of plants and fungi is a hydrogen ion pump. The proton gradient it generates drives the active transport of nutrients by H(+)-symport. The resulting external acidification and/or internal alkinization may mediate growth responses. The chain is Plasma membrane ATPase (pma-1) from Neurospora crassa (strain ATCC 24698 / 74-OR23-1A / CBS 708.71 / DSM 1257 / FGSC 987).